The primary structure comprises 245 residues: Cytochrome c oxidase subunit 2 (245 aa).

Residues 1 to 36 are Mitochondrial intermembrane-facing; the sequence is MYMLNNMLNDVPTPWGMFFQDSATPNMEGMMELHNN. A helical transmembrane segment spans residues 37 to 56; sequence VMFYLCMMLGFVSYMLYNML. The Mitochondrial matrix portion of the chain corresponds to 57-76; the sequence is TTYNHSVLPYKYLYHGQFIE. Residues 77-101 form a helical membrane-spanning segment; sequence IVWTTFPAMILLIIAFPSFILLYIC. The Mitochondrial intermembrane segment spans residues 102-245; sequence DEVIAPAMTI…GEFLAWIDEQ (144 aa). H180, C215, E217, C219, H223, and M226 together coordinate Cu cation. E217 provides a ligand contact to Mg(2+).

Belongs to the cytochrome c oxidase subunit 2 family. Component of the cytochrome c oxidase (complex IV, CIV), a multisubunit enzyme composed of a catalytic core of 3 subunits and several supernumerary subunits. The complex exists as a monomer or a dimer and forms supercomplexes (SCs) in the inner mitochondrial membrane with ubiquinol-cytochrome c oxidoreductase (cytochrome b-c1 complex, complex III, CIII). It depends on Cu cation as a cofactor.

Its subcellular location is the mitochondrion inner membrane. It carries out the reaction 4 Fe(II)-[cytochrome c] + O2 + 8 H(+)(in) = 4 Fe(III)-[cytochrome c] + 2 H2O + 4 H(+)(out). In terms of biological role, component of the cytochrome c oxidase, the last enzyme in the mitochondrial electron transport chain which drives oxidative phosphorylation. The respiratory chain contains 3 multisubunit complexes succinate dehydrogenase (complex II, CII), ubiquinol-cytochrome c oxidoreductase (cytochrome b-c1 complex, complex III, CIII) and cytochrome c oxidase (complex IV, CIV), that cooperate to transfer electrons derived from NADH and succinate to molecular oxygen, creating an electrochemical gradient over the inner membrane that drives transmembrane transport and the ATP synthase. Cytochrome c oxidase is the component of the respiratory chain that catalyzes the reduction of oxygen to water. Electrons originating from reduced cytochrome c in the intermembrane space (IMS) are transferred via the dinuclear copper A center (CU(A)) of subunit 2 and heme A of subunit 1 to the active site in subunit 1, a binuclear center (BNC) formed by heme A3 and copper B (CU(B)). The BNC reduces molecular oxygen to 2 water molecules using 4 electrons from cytochrome c in the IMS and 4 protons from the mitochondrial matrix. The protein is Cytochrome c oxidase subunit 2 (COX2) of Dekkera bruxellensis (Brettanomyces custersii).